Consider the following 74-residue polypeptide: Large ribosomal subunit protein bL31 (74 aa).

Residues Cys16, Cys18, Cys37, and Cys40 each contribute to the Zn(2+) site.

The protein belongs to the bacterial ribosomal protein bL31 family. Type A subfamily. As to quaternary structure, part of the 50S ribosomal subunit. Requires Zn(2+) as cofactor.

Functionally, binds the 23S rRNA. The protein is Large ribosomal subunit protein bL31 of Koribacter versatilis (strain Ellin345).